The following is a 447-amino-acid chain: Tubulin beta-2 chain (447 aa).

GTP-binding residues include Gln9, Glu67, Ser136, Gly140, Thr141, Gly142, Asn202, and Asn224. Glu67 provides a ligand contact to Mg(2+). The segment covering 411–425 (SNMNDLVSEYQQYQD) has biased composition (polar residues). The interval 411–447 (SNMNDLVSEYQQYQDATAEEDEYEEEEEDYHQEHDEM) is disordered. A compositionally biased stretch (acidic residues) spans 427–440 (TAEEDEYEEEEEDY).

The protein belongs to the tubulin family. In terms of assembly, dimer of alpha and beta chains. A typical microtubule is a hollow water-filled tube with an outer diameter of 25 nm and an inner diameter of 15 nM. Alpha-beta heterodimers associate head-to-tail to form protofilaments running lengthwise along the microtubule wall with the beta-tubulin subunit facing the microtubule plus end conferring a structural polarity. Microtubules usually have 13 protofilaments but different protofilament numbers can be found in some organisms and specialized cells. Requires Mg(2+) as cofactor.

It is found in the cytoplasm. The protein resides in the cytoskeleton. In terms of biological role, tubulin is the major constituent of microtubules, a cylinder consisting of laterally associated linear protofilaments composed of alpha- and beta-tubulin heterodimers. Microtubules grow by the addition of GTP-tubulin dimers to the microtubule end, where a stabilizing cap forms. Below the cap, tubulin dimers are in GDP-bound state, owing to GTPase activity of alpha-tubulin. The chain is Tubulin beta-2 chain (TUBB2) from Pisum sativum (Garden pea).